A 728-amino-acid chain; its full sequence is Catalase-peroxidase 2 (728 aa).

A cross-link (tryptophyl-tyrosyl-methioninium (Trp-Tyr) (with M-240)) is located at residues 91-214 (WHAAGTYRTG…LAAVQMGLIY (124 aa)). His92 functions as the Proton acceptor in the catalytic mechanism. The segment at residues 214–240 (YVNPEGPNGNPDPAKAAVDIRETFARM) is a cross-link (tryptophyl-tyrosyl-methioninium (Tyr-Met) (with W-91)). A heme b-binding site is contributed by His255. The disordered stretch occupies residues 338–362 (WKPNGDAGANSIPDPYDPSRRRGPT).

Belongs to the peroxidase family. Peroxidase/catalase subfamily. Homodimer or homotetramer. Requires heme b as cofactor. In terms of processing, formation of the three residue Trp-Tyr-Met cross-link is important for the catalase, but not the peroxidase activity of the enzyme.

It carries out the reaction H2O2 + AH2 = A + 2 H2O. The enzyme catalyses 2 H2O2 = O2 + 2 H2O. Bifunctional enzyme with both catalase and broad-spectrum peroxidase activity. This is Catalase-peroxidase 2 from Cupriavidus pinatubonensis (strain JMP 134 / LMG 1197) (Cupriavidus necator (strain JMP 134)).